Consider the following 1238-residue polypeptide: Protein translocase subunit SecA 1 (1238 aa).

Residues Gln-107, 125 to 129 (GEGKT), and Asp-570 each bind ATP. The tract at residues 1194 to 1220 (AAGSEGRAEGSVDTVRVEEPRIGRNAP) is disordered. Over residues 1199-1215 (GRAEGSVDTVRVEEPRI) the composition is skewed to basic and acidic residues. Zn(2+) contacts are provided by Cys-1221, Cys-1223, Cys-1232, and Cys-1233.

It belongs to the SecA family. As to quaternary structure, monomer and homodimer. Part of the essential Sec protein translocation apparatus which comprises SecA, SecYEG and auxiliary proteins SecDF. Other proteins may also be involved. Zn(2+) is required as a cofactor.

Its subcellular location is the cell inner membrane. The protein resides in the cytoplasm. The enzyme catalyses ATP + H2O + cellular proteinSide 1 = ADP + phosphate + cellular proteinSide 2.. Its function is as follows. Part of the Sec protein translocase complex. Interacts with the SecYEG preprotein conducting channel. Has a central role in coupling the hydrolysis of ATP to the transfer of proteins into and across the cell membrane, serving as an ATP-driven molecular motor driving the stepwise translocation of polypeptide chains across the membrane. This is Protein translocase subunit SecA 1 from Rhodopirellula baltica (strain DSM 10527 / NCIMB 13988 / SH1).